We begin with the raw amino-acid sequence, 535 residues long: Protein translocase subunit SecD (535 aa).

Helical transmembrane passes span 5 to 25 (LTWKVVVIVAVLLVFAFGIIG), 377 to 397 (AIIGFVAVIIFMLIYYKGAGI), 402 to 421 (SLLLNLVILLGFMGYFGAVL), 425 to 444 (GIAGVILTVGMGVDSNVLIF), 469 to 489 (WLTIIDTHVTTIVSAIILFLF), and 496 to 516 (GFAVTLSFGLFANLFTAVFVS).

Belongs to the SecD/SecF family. SecD subfamily. In terms of assembly, forms a complex with SecF. Part of the essential Sec protein translocation apparatus which comprises SecA, SecYEG and auxiliary proteins SecDF. Other proteins may also be involved.

The protein resides in the cell inner membrane. In terms of biological role, part of the Sec protein translocase complex. Interacts with the SecYEG preprotein conducting channel. SecDF uses the proton motive force (PMF) to complete protein translocation after the ATP-dependent function of SecA. The sequence is that of Protein translocase subunit SecD from Koribacter versatilis (strain Ellin345).